Reading from the N-terminus, the 247-residue chain is MPGRSSTNSGSTRYISFSGVESALSSLKTFQSCISSGMDTVSSVALDLVETQTEVSSEYSMDKAMVEFAKMDRELNHYVKAVQSTINHVKEERPEKVPDLKLLVEKKFLALQDKNSDADFKENEKFVQFKQQLRELKKQYGIHADRENDGIEGMDEDMIVTQSQTNFICPITQLEMKKPVKNKMCGHTYEEEAIVRMIESKHKRKKKACCPKIGCSHTDMRMSDLIPDEALRRAIESHNKKKKRHSE.

An N-acetylmethionine modification is found at Met-1. Residues Lys-90 and Lys-107 each participate in a glycyl lysine isopeptide (Lys-Gly) (interchain with G-Cter in SUMO2) cross-link. Ser-116 carries the phosphoserine modification. Residues Lys-125 and Lys-130 each participate in a glycyl lysine isopeptide (Lys-Gly) (interchain with G-Cter in SUMO2) cross-link. The segment at 154–240 (MDEDMIVTQS…LRRAIESHNK (87 aa)) adopts an SP-RING-type zinc-finger fold. Cys-185, His-187, Cys-210, and Cys-215 together coordinate Zn(2+).

Belongs to the NSE2 family. In terms of assembly, component of the SMC5-SMC6 complex which consists at least of SMC5, SMC6, NSMCE2, NSMCE1, NSMCE4A or EID3 and NSMCE3. Sumoylated, possibly via autosumoylation.

Its subcellular location is the nucleus. The protein resides in the chromosome. It is found in the telomere. The protein localises to the PML body. The protein operates within protein modification; protein sumoylation. In terms of biological role, E3 SUMO-protein ligase component of the SMC5-SMC6 complex, a complex involved in DNA double-strand break repair by homologous recombination. Is not be required for the stability of the complex. The complex may promote sister chromatid homologous recombination by recruiting the SMC1-SMC3 cohesin complex to double-strand breaks. Acts as an E3 ligase mediating SUMO attachment to various proteins such as SMC6L1 and TSNAX, the shelterin complex subunits TERF1, TERF2, TINF2 and TERF2IP, RAD51AP1, and maybe the cohesin components RAD21 and STAG2. Required for recruitment of telomeres to PML nuclear bodies. Required for sister chromatid cohesion during prometaphase and mitotic progression. The sequence is that of E3 SUMO-protein ligase NSE2 (Nsmce2) from Rattus norvegicus (Rat).